Here is a 467-residue protein sequence, read N- to C-terminus: Dimethylamine methyltransferase MtbB2 (467 aa).

Pyl356 is a non-standard amino acid (pyrrolysine).

This sequence belongs to the dimethylamine methyltransferase family.

It catalyses the reaction Co(I)-[dimethylamine-specific corrinoid protein] + dimethylamine + H(+) = methyl-Co(III)-[dimethylamine-specific corrinoid protein] + methylamine. It functions in the pathway one-carbon metabolism; methanogenesis from dimethylamine. Functionally, catalyzes the transfer of a methyl group from dimethylamine to the corrinoid cofactor of MtbC. The chain is Dimethylamine methyltransferase MtbB2 (mtbB2) from Methanosarcina barkeri (strain Fusaro / DSM 804).